We begin with the raw amino-acid sequence, 437 residues long: Xylose isomerase (437 aa).

Active-site residues include His-101 and Asp-104. Mg(2+) is bound by residues Glu-232, Glu-268, His-271, Asp-296, Asp-307, Asp-309, and Asp-339.

This sequence belongs to the xylose isomerase family. As to quaternary structure, homotetramer. Requires Mg(2+) as cofactor.

It localises to the cytoplasm. The catalysed reaction is alpha-D-xylose = alpha-D-xylulofuranose. The sequence is that of Xylose isomerase from Mannheimia succiniciproducens (strain KCTC 0769BP / MBEL55E).